The primary structure comprises 248 residues: Large ribosomal subunit protein uL1 (248 aa).

The protein belongs to the universal ribosomal protein uL1 family. In terms of assembly, part of the 50S ribosomal subunit.

Its function is as follows. Binds directly to 23S rRNA. The L1 stalk is quite mobile in the ribosome, and is involved in E site tRNA release. Protein L1 is also a translational repressor protein, it controls the translation of the L11 operon by binding to its mRNA. This Orientia tsutsugamushi (strain Boryong) (Rickettsia tsutsugamushi) protein is Large ribosomal subunit protein uL1.